Consider the following 192-residue polypeptide: uncharacterized protein (192 aa).

In terms of domain architecture, Nudix hydrolase spans 29 to 160; it reads HRQAAVLIPI…PLDIYRRGDS (132 aa). The Nudix box signature appears at 67–89; the sequence is GAVDDTDASVIAAALREAEEEVA. Positions 83 and 87 each coordinate Mg(2+).

The protein belongs to the Nudix hydrolase family. PCD1 subfamily. It depends on Mn(2+) as a cofactor. Requires Mg(2+) as cofactor.

Functionally, probably mediates the hydrolysis of some nucleoside diphosphate derivatives. This is an uncharacterized protein from Escherichia coli (strain SE11).